Here is a 214-residue protein sequence, read N- to C-terminus: Orotate phosphoribosyltransferase (214 aa).

Residues Arg125, Lys126, Lys129, His131, and 151 to 159 each bind 5-phospho-alpha-D-ribose 1-diphosphate; that span reads EDTSTTGNS. Orotate is bound by residues Thr155 and Arg183.

This sequence belongs to the purine/pyrimidine phosphoribosyltransferase family. PyrE subfamily. Homodimer. It depends on Mg(2+) as a cofactor.

The enzyme catalyses orotidine 5'-phosphate + diphosphate = orotate + 5-phospho-alpha-D-ribose 1-diphosphate. It participates in pyrimidine metabolism; UMP biosynthesis via de novo pathway; UMP from orotate: step 1/2. Its function is as follows. Catalyzes the transfer of a ribosyl phosphate group from 5-phosphoribose 1-diphosphate to orotate, leading to the formation of orotidine monophosphate (OMP). The sequence is that of Orotate phosphoribosyltransferase from Tropheryma whipplei (strain TW08/27) (Whipple's bacillus).